We begin with the raw amino-acid sequence, 532 residues long: Omega-hydroxyceramide transacylase (532 aa).

Residues 16-185 (ISFSGSGFLS…TGMQPCAFWT (170 aa)) form the PNPLA domain. Residues 51–55 (GTSAG) carry the GXSXG motif. Ser-53 functions as the Nucleophile in the catalytic mechanism. The active-site Proton acceptor is Asp-172. The short motif at 172–174 (DGG) is the DGA/G element. Disordered stretches follow at residues 290–457 (PERS…ELGQ) and 489–532 (VTES…SKVQ). The segment covering 310–322 (PHKEWVPKGDGRG) has biased composition (basic and acidic residues). 2 stretches are compositionally biased toward low complexity: residues 380 to 389 (PPSSTPGSSL) and 397 to 411 (SPLS…SGSP). Positions 517–532 (GFPRHSGSKKPSSKVQ) are enriched in basic residues.

In terms of tissue distribution, expressed in the digestive system. Expressed in the epidermis of skin keratinocytes. Strongly expressed in the granular layer. Expressed in the upper epidermis and eccrine sweat glands of the dermis and in the region of keratin filament bundles, which is more pronounced in upper epidermal layers and in the lower cornified layers.

Its subcellular location is the cytoplasm. The enzyme catalyses an N-(omega-hydroxy-ultra-long chain fatty acyl)-sphingoid base + a (9Z,12Z)-octadecadienoyl-containing triacyl-sn-glycerol = an N-[omega-(9Z,12Z-octadecadienoyloxy)-O-ultra-long chain fatty acyl]-sphingoid base + a diacylglycerol. It catalyses the reaction an N-(omega-hydroxy-ultra-long chain fatty acyl)-sphing-4-enine + a (9Z,12Z)-octadecadienoyl-containing triacyl-sn-glycerol = an N-(omega-(9Z,12Z-octadecadienoyloxy)-ultra-long chain fatty acyl)-sphing-4-enine + a diacylglycerol. The catalysed reaction is N-(30-hydroxytriacontanoyl)-sphing-4-enine + 1,2,3-tri-(9Z,12Z)-octadecadienoylglycerol = N-[30-(9Z,12Z-octadecadienoyloxy)-triacontanoyl]-sphing-4-enine + di-(9Z,12Z)-octadecadienoylglycerol. It carries out the reaction N-(28-hydroxyoctacosanoyl)-sphing-4-enine + a (9Z,12Z)-octadecadienoyl-containing triacyl-sn-glycerol = N-(28-(9Z,12Z-octadecadienoyloxy)-octacosanoyl)-sphing-4-enine + a diacylglycerol. The enzyme catalyses N-(32-hydroxydotriacontanoyl)-sphing-4-enine + a (9Z,12Z)-octadecadienoyl-containing triacyl-sn-glycerol = N-(32-(9Z,12Z-octadecadienoyloxy)-dotricontanoyl)-sphing-4-enine + a diacylglycerol. It catalyses the reaction N-(32-hydroxydotriacontenoyl)-sphing-4-enine + a (9Z,12Z)-octadecadienoyl-containing triacyl-sn-glycerol = an N-(32-(9Z,12Z-octadecadienoyloxy)-dotriacontenoyl)-sphing-4-enine + a diacylglycerol. The catalysed reaction is an N-(34-hydroxytetratriacontenoyl)-sphing-4-enine + a (9Z,12Z)-octadecadienoyl-containing triacyl-sn-glycerol = an N-(34-(9Z,12Z-octadecadienoyloxy)-tetratriacontenoyl)-sphing-4-enine + a diacylglycerol. It carries out the reaction an N-(34-hydroxytetratriacontadienoyl)-sphing-4-enine + a (9Z,12Z)-octadecadienoyl-containing triacyl-sn-glycerol = an N-(34-(9Z,12Z-octadecadienoyloxy)-tetratriacontadienoyl)-sphing-4-enine + a diacylglycerol. The enzyme catalyses an N-(36-hydroxyhexatriacontenoyl)-sphing-4-enine + a (9Z,12Z)-octadecadienoyl-containing triacyl-sn-glycerol = an N-(36-(9Z,12Z-octadecadienoyloxy)-hexatriacontenoyl)-sphing-4-enine + a diacylglycerol. It catalyses the reaction an N-(36-hydroxyhexatriacontadienoyl)-sphing-4-enine + a (9Z,12Z)-octadecadienoyl-containing triacyl-sn-glycerol = an N-(36-(9Z,12Z-octadecadienoyloxy)-hexatriacontadienoyl)-sphing-4-enine + a diacylglycerol. The catalysed reaction is an N-(38-hydroxyoctatriacontenoyl)-sphing-4-enine + a (9Z,12Z)-octadecadienoyl-containing triacyl-sn-glycerol = an N-(38-(9Z,12Z-octadecadienoyloxy)-octatriacontenoyl)-sphing-4-enine + a diacylglycerol. Omega-hydroxyceramide transacylase involved in the synthesis of omega-O-acylceramides (esterified omega-hydroxyacyl-sphingosine; EOS), which are extremely hydrophobic lipids involved in skin barrier formation. Catalyzes the last step of the synthesis of omega-O-acylceramides by transferring linoleic acid from triglycerides to an omega-hydroxyceramide. Omega-O-acylceramides, are required for the biogenesis of lipid lamellae in the stratum corneum and the formation of the cornified lipid envelope which are essential for the epidermis barrier function. These lipids also play a role in keratinocyte differentiation. May also act on omega-hydroxylated ultra-long chain fatty acids (omega-OH ULCFA) and acylglucosylceramides (GlcEOS). The protein is Omega-hydroxyceramide transacylase of Homo sapiens (Human).